Consider the following 291-residue polypeptide: Lipoyl synthase, organellar chromatophore (291 aa).

C33, C38, C44, C59, C63, C66, and S274 together coordinate [4Fe-4S] cluster. Residues 45–263 (FAGGTATFLI…AIGELEMNFL (219 aa)) enclose the Radical SAM core domain.

It belongs to the radical SAM superfamily. Lipoyl synthase family. [4Fe-4S] cluster is required as a cofactor.

It is found in the plastid. Its subcellular location is the organellar chromatophore. The catalysed reaction is [[Fe-S] cluster scaffold protein carrying a second [4Fe-4S](2+) cluster] + N(6)-octanoyl-L-lysyl-[protein] + 2 oxidized [2Fe-2S]-[ferredoxin] + 2 S-adenosyl-L-methionine + 4 H(+) = [[Fe-S] cluster scaffold protein] + N(6)-[(R)-dihydrolipoyl]-L-lysyl-[protein] + 4 Fe(3+) + 2 hydrogen sulfide + 2 5'-deoxyadenosine + 2 L-methionine + 2 reduced [2Fe-2S]-[ferredoxin]. The protein operates within protein modification; protein lipoylation via endogenous pathway; protein N(6)-(lipoyl)lysine from octanoyl-[acyl-carrier-protein]: step 2/2. Functionally, catalyzes the radical-mediated insertion of two sulfur atoms into the C-6 and C-8 positions of the octanoyl moiety bound to the lipoyl domains of lipoate-dependent enzymes, thereby converting the octanoylated domains into lipoylated derivatives. This Paulinella chromatophora protein is Lipoyl synthase, organellar chromatophore.